A 463-amino-acid chain; its full sequence is MNLQWQKYPENASKLFKLTVPIFISQLSASGMGLADIVMAGLVSDDDVSAIAVSNSIYFPLFLFVLGVLNAITPTVSYLNGANQRNLIAHQIRQGFWLVWAFVIPLIVVFLNSHWILDYMNTPAVFAQKSQDYLAIMAIGIVPALLTVNLRCMNDGLANPKPAMRITFIGLLCNIPLNYIFIFGKFGVPEMGAVGCGVATAIVNWSMFLMMFHYCYTNKPQKDIGLFNKWFEMPSGKTLLKICKLGLPIGFATFTEVMLFSTSALFLSPLGSQVVASHQTALQTSSMLFMVPLSFGIATTIVLGRVLGQKLVEEAKIISYHALITGVIFAVIAAILIVLFNNIIPLAFTRDPVSIAIASHLLLFAAVYQIPDSLQVVANGILRGYKHTKPVLYVTVFCYWGIGIPFGYVLARTDWIVQPMAAAGFWLIFCVSLSLASGLLIYQIRKIQKIPAATLIAKLERIK.

12 helical membrane-spanning segments follow: residues 20 to 42, 57 to 79, 96 to 118, 133 to 150, 162 to 184, 194 to 216, 245 to 267, 287 to 306, 318 to 340, 355 to 377, 390 to 412, and 422 to 444; these read VPIF…MAGL, IYFP…VSYL, FWLV…WILD, YLAI…TVNL, PAMR…FIFG, VGCG…HYCY, LGLP…ALFL, MLFM…LGRV, ISYH…IVLF, IAIA…LQVV, PVLY…VLAR, and AAGF…IYQI.

The protein belongs to the multi antimicrobial extrusion (MATE) (TC 2.A.66.1) family.

The protein resides in the cell inner membrane. Multidrug efflux pump. The protein is Probable multidrug resistance protein NorM (norM) of Haemophilus ducreyi (strain 35000HP / ATCC 700724).